We begin with the raw amino-acid sequence, 80 residues long: uncharacterized protein (80 aa).

Helical transmembrane passes span 15–35 and 45–65; these read ALGL…LSGV and WFEM…WAMV.

The protein to H.influenzae HI_0974B.

The protein localises to the cell membrane. This is an uncharacterized protein from Escherichia coli (strain K12).